A 1179-amino-acid chain; its full sequence is Tubulin glycylase 3B (1179 aa).

A compositionally biased stretch (polar residues) spans 177 to 199 (NKGQTNNSNRENGGNFHSEQSPK). Disordered stretches follow at residues 177–208 (NKGQTNNSNRENGGNFHSEQSPKSAAGSVVSG), 250–278 (QQPQPLSQQHSNQSSQSSNPQSQSPLPLS), 592–625 (KVLSNTKSKDEEESSDDDETPVKSKSNNQNAVQQ), and 853–890 (QKQHMNKRKNSHRISVNHNHNDPIEEESAQSSTSLKQD). Basic and acidic residues predominate over residues 592–601 (KVLSNTKSKD). Composition is skewed to polar residues over residues 614 to 625 (KSKSNNQNAVQQ) and 881 to 890 (AQSSTSLKQD). The region spanning 790-1152 (FIDFYETVDF…SMAKKGTKKN (363 aa)) is the TTL domain. ATP contacts are provided by residues 965–968 (QKYI), lysine 978, and aspartate 980.

The protein localises to the cell projection. Its subcellular location is the cilium. It localises to the cytoplasm. It is found in the cytoskeleton. The protein resides in the cilium axoneme. In terms of biological role, polyglycylase which modifies tubulin, generating side chains of glycine on the gamma-carboxyl groups of specific glutamate residues within the C-terminal tail of tubulin. Polyglycylates tubulin, with a preference for alpha-tubulin toward beta-tubulin. This Tetrahymena thermophila (strain SB210) protein is Tubulin glycylase 3B (TTLL3B).